Reading from the N-terminus, the 476-residue chain is Cysteine--tRNA ligase (476 aa).

Cysteine 28 contacts Zn(2+). The short motif at 30-40 (PTVYDHTHLGH) is the 'HIGH' region element. Zn(2+)-binding residues include cysteine 208, histidine 233, and glutamate 237. The 'KMSKS' region motif lies at 265–269 (KMSKS). Lysine 268 contacts ATP.

Belongs to the class-I aminoacyl-tRNA synthetase family. Requires Zn(2+) as cofactor.

The protein localises to the cytoplasm. It catalyses the reaction tRNA(Cys) + L-cysteine + ATP = L-cysteinyl-tRNA(Cys) + AMP + diphosphate. In Methanococcus maripaludis (strain C7 / ATCC BAA-1331), this protein is Cysteine--tRNA ligase.